The sequence spans 216 residues: uncharacterized protein (216 aa).

This is an uncharacterized protein from Escherichia coli (strain K12).